The chain runs to 377 residues: tRNA(Met) cytidine acetate ligase (377 aa).

Residues 7–20 (VTEY…HLYH), G100, N153, and R178 each bind ATP.

The protein belongs to the TmcAL family.

It localises to the cytoplasm. The catalysed reaction is cytidine(34) in elongator tRNA(Met) + acetate + ATP = N(4)-acetylcytidine(34) in elongator tRNA(Met) + AMP + diphosphate. In terms of biological role, catalyzes the formation of N(4)-acetylcytidine (ac(4)C) at the wobble position of elongator tRNA(Met), using acetate and ATP as substrates. First activates an acetate ion to form acetyladenylate (Ac-AMP) and then transfers the acetyl group to tRNA to form ac(4)C34. This chain is tRNA(Met) cytidine acetate ligase, found in Staphylococcus saprophyticus subsp. saprophyticus (strain ATCC 15305 / DSM 20229 / NCIMB 8711 / NCTC 7292 / S-41).